The following is a 98-amino-acid chain: Small ribosomal subunit protein eS24 (98 aa).

Belongs to the eukaryotic ribosomal protein eS24 family.

The chain is Small ribosomal subunit protein eS24 (rps2e) from Thermoplasma acidophilum (strain ATCC 25905 / DSM 1728 / JCM 9062 / NBRC 15155 / AMRC-C165).